We begin with the raw amino-acid sequence, 114 residues long: Beta-microseminoprotein J1 (114 aa).

An N-terminal signal peptide occupies residues methionine 1–alanine 20. Disulfide bonds link cysteine 22/cysteine 70, cysteine 38/cysteine 62, cysteine 57/cysteine 93, cysteine 60/cysteine 69, and cysteine 84/cysteine 107.

Belongs to the beta-microseminoprotein family.

The protein localises to the secreted. This is Beta-microseminoprotein J1 (MSPJ) from Saguinus oedipus (Cotton-top tamarin).